The sequence spans 133 residues: Snaclec botrocetin subunit alpha (133 aa).

Cystine bridges form between C2–C13, C30–C128, and C103–C120. The 121-residue stretch at 9-129 folds into the C-type lectin domain; sequence YEGNCYKFFQ…CAQKNPFVCK (121 aa).

This sequence belongs to the snaclec family. As to quaternary structure, heterodimer of subunits alpha and beta; disulfide-linked. Botrocetin and vWF form a soluble complex. In terms of tissue distribution, expressed by the venom gland.

The protein resides in the secreted. Its function is as follows. Snaclec that binds to von Willebrand factor (VWF) and induces its interaction with GPIbalpha (GP1BA) (via the vWF A1 domain), resulting in platelet aggregation. The chain is Snaclec botrocetin subunit alpha from Bothrops jararaca (Jararaca).